A 90-amino-acid chain; its full sequence is MMLKMGAMFVLLLLFILPSSQQEGDVQARKTHLKRGFYGTLAMSTRGCSGTCHRREDGKCRGTCDCSGYSYCRCGDAHHFYRGCTCSCQG.

The N-terminal stretch at M1 to Q21 is a signal peptide. A propeptide spanning residues Q22–R46 is cleaved from the precursor. Position 89 is a glutamine amide (Q89).

Belongs to the conotoxin S superfamily. In terms of processing, contains 5 disulfide bonds. As to expression, expressed by the venom duct.

Its subcellular location is the secreted. The polypeptide is Conotoxin Ca8.2 (Conus caracteristicus (Characteristic cone)).